The primary structure comprises 313 residues: Protein OPG185 (313 aa).

A signal peptide spans 1–16 (MTQLPILLLLISLVYA). At 17–274 (TPSPQTSKKI…TSISNYKTKD (258 aa)) the chain is on the virion surface side. Residues Asn37, Asn69, Asn112, Asn159, Asn194, and Asn252 are each glycosylated (N-linked (GlcNAc...) asparagine; by host). A helical transmembrane segment spans residues 275 to 295 (FVEIFGITTLIILSAVAIFCI). Topologically, residues 296–313 (TYYICNKHPRKYKTENKV) are intravirion.

The protein belongs to the orthopoxvirus OPG185 family. Heterodimerizes with OPG040. The heterodimer OPG185-OPG040 interacts with components of the entry fusion complex OPG143 and OPG094. Heterodimer with C3/VPC protein; disulfide-linked. Glycosylated; contains phosphate and sulfate-substituted glycans. O-glycosylation is required for hemagglutination and hemadsorption activities of infected cell membranes.

Its subcellular location is the virion membrane. The protein localises to the host membrane. In terms of biological role, prevents cell to cell fusion by interacting with and directing the viral OPG040 protein on the host plasma membrane. The OPG185-OPG040 complex associates with components of the entry fusion complex (EFC) presumably to avoid superinfection and syncytium formation. Via its interaction with C3/VCP protein, protects the infected cell and probably also the extracellular enveloped virus from complement attack. The chain is Protein OPG185 (OPG185) from Monkeypox virus.